Here is an 821-residue protein sequence, read N- to C-terminus: Calpain-3 (821 aa).

Residues 1–34 (MPTVISASMAPRTGASQVPRTMPQAAQGKGTEAG) are disordered. The Calpain catalytic domain maps to 73-417 (LYLDPEFPPD…FTKLEICNLT (345 aa)). Catalysis depends on residues C128, H334, and N358. A domain III region spans residues 418-586 (ADALESDKLQ…KRNLSEEVEN (169 aa)). A linker region spans residues 587 to 649 (TISVDRPVRK…EPSNTDQESE (63 aa)). A disordered region spans residues 603-652 (IFVSDRANSNKELGVDQESEEGQDKTSPDKQEKSPKPEPSNTDQESEEQQ). The segment covering 624 to 638 (GQDKTSPDKQEKSPK) has biased composition (basic and acidic residues). Residues 641–652 (PSNTDQESEEQQ) show a composition bias toward polar residues. EF-hand domains lie at 649-683 (EEQQ…VVNK), 692-725 (FTLE…KKIK), 722-757 (KKIK…AGFH), and 787-821 (VRLE…TMYA). Residues 650 to 821 (EQQQFRNIFR…LEWLQLTMYA (172 aa)) are domain IV. Residues A662, D665, E667, E672, D705, D707, S709, R711, E716, D735, D737, S739, T741, E746, D800, D802, D804, and I806 each coordinate Ca(2+).

Belongs to the peptidase C2 family. As to quaternary structure, homodimer; via EF-hand domain 4. Interacts with TTN/titin. Interacts with CMYA5; this interaction, which results in CMYA5 proteolysis, may protect CAPN3 from autolysis. Interacts with SIMC1. Interacts with UTP25; the interaction is required for CAPN3 translocation to the nucleolus. As to expression, skeletal muscle.

The protein localises to the cytoplasm. It is found in the nucleus. Its subcellular location is the nucleolus. It carries out the reaction Broad endopeptidase activity.. Activated by micromolar concentrations of calcium and inhibited by calpastatin. Its function is as follows. Calcium-regulated non-lysosomal thiol-protease. Proteolytically cleaves CTBP1. Mediates, with UTP25, the proteasome-independent degradation of p53/TP53. The protein is Calpain-3 (CAPN3) of Sus scrofa (Pig).